We begin with the raw amino-acid sequence, 574 residues long: Efflux pump FUB11 (574 aa).

Positions 1-44 (MAIDPQPSSPSLSSETIANDTIGNDNNVNEPSVEPKTQEHQHTV) are disordered. A compositionally biased stretch (polar residues) spans 9–30 (SPSLSSETIANDTIGNDNNVNE). A glycan (N-linked (GlcNAc...) asparagine) is linked at asparagine 19. The next 11 helical transmembrane spans lie at 116-136 (VATLGISLYVLGFTFGPLIWA), 148-168 (FFFTFMVATAFSAGAAGAGSI), 176-196 (FLTGSIGSAPLSNAPALIADM), 208-228 (MFSGAPFLGPAIGPIAGGFLG), 235-255 (WLHGLMAAFTGVTWIACTVFI), 318-338 (IYISIIYGTMYMCFAAFPIVF), 348-368 (IGGLAFTGIVIGVILSIISFA), 394-414 (AIMGSLLIPIGLFWFAWTTFA), 419-439 (IVPIIGTVFFAWGLVLVFMAL), 449-469 (IFAASIMAANSALRSLFGAAF), and 484-504 (WASSIPAFLALACVPFPFLFY). Residues 552–574 (HNSHTSATHSHGHRRSLSCTRSV) form a disordered region.

Belongs to the major facilitator superfamily. DHA1 family. Polyamines/proton antiporter (TC 2.A.1.2.16) subfamily.

The protein localises to the cell membrane. Its function is as follows. Efflux pump involved in export of fusaric acid, a mycotoxin with low to moderate toxicity to animals and humans, but with high phytotoxic properties. Constitutes a self-protecting mechanism of the fungus against critical levels of fusaric acid within the cell. In Gibberella fujikuroi (strain CBS 195.34 / IMI 58289 / NRRL A-6831) (Bakanae and foot rot disease fungus), this protein is Efflux pump FUB11.